We begin with the raw amino-acid sequence, 343 residues long: Protein phosphatase 2C homolog 7, mitochondrial (343 aa).

The N-terminal 39 residues, M1 to G39, are a transit peptide targeting the mitochondrion. Residues I76 to V342 enclose the PPM-type phosphatase domain. D109, G110, and D265 together coordinate Mn(2+).

Mg(2+) serves as cofactor. It depends on Mn(2+) as a cofactor.

Its subcellular location is the mitochondrion. The catalysed reaction is O-phospho-L-seryl-[protein] + H2O = L-seryl-[protein] + phosphate. It carries out the reaction O-phospho-L-threonyl-[protein] + H2O = L-threonyl-[protein] + phosphate. Functionally, protein phosphatase which positively regulates biosynthesis of the ubiquinone, coenzyme Q. Dephosphorylates and activates the ubiquinone biosynthesis protein CAT5/COQ7. Also dephosphorylates CIT1 on 'Ser-462', which leads to its activation. The sequence is that of Protein phosphatase 2C homolog 7, mitochondrial (PTC7) from Saccharomyces cerevisiae (strain ATCC 204508 / S288c) (Baker's yeast).